We begin with the raw amino-acid sequence, 242 residues long: Pyridoxine 5'-phosphate synthase (242 aa).

Asn-9 provides a ligand contact to 3-amino-2-oxopropyl phosphate. Residue 11–12 (DH) participates in 1-deoxy-D-xylulose 5-phosphate binding. Residue Arg-20 coordinates 3-amino-2-oxopropyl phosphate. His-45 functions as the Proton acceptor in the catalytic mechanism. Residues Arg-47 and His-52 each coordinate 1-deoxy-D-xylulose 5-phosphate. The Proton acceptor role is filled by Glu-72. Thr-102 provides a ligand contact to 1-deoxy-D-xylulose 5-phosphate. His-193 acts as the Proton donor in catalysis. 3-amino-2-oxopropyl phosphate contacts are provided by residues Gly-194 and 215 to 216 (GH).

The protein belongs to the PNP synthase family. In terms of assembly, homooctamer; tetramer of dimers.

Its subcellular location is the cytoplasm. It carries out the reaction 3-amino-2-oxopropyl phosphate + 1-deoxy-D-xylulose 5-phosphate = pyridoxine 5'-phosphate + phosphate + 2 H2O + H(+). Its pathway is cofactor biosynthesis; pyridoxine 5'-phosphate biosynthesis; pyridoxine 5'-phosphate from D-erythrose 4-phosphate: step 5/5. In terms of biological role, catalyzes the complicated ring closure reaction between the two acyclic compounds 1-deoxy-D-xylulose-5-phosphate (DXP) and 3-amino-2-oxopropyl phosphate (1-amino-acetone-3-phosphate or AAP) to form pyridoxine 5'-phosphate (PNP) and inorganic phosphate. The polypeptide is Pyridoxine 5'-phosphate synthase (Idiomarina loihiensis (strain ATCC BAA-735 / DSM 15497 / L2-TR)).